Here is a 606-residue protein sequence, read N- to C-terminus: UvrABC system protein C (606 aa).

One can recognise a GIY-YIG domain in the interval 18–96 (SQPGVYRMMN…IKSLNPRYNI (79 aa)). In terms of domain architecture, UVR spans 205–240 (TEVLKSITRKMHEAAEEQEYEQAALFRDQIQSLRKI).

This sequence belongs to the UvrC family. As to quaternary structure, interacts with UvrB in an incision complex.

The protein localises to the cytoplasm. In terms of biological role, the UvrABC repair system catalyzes the recognition and processing of DNA lesions. UvrC both incises the 5' and 3' sides of the lesion. The N-terminal half is responsible for the 3' incision and the C-terminal half is responsible for the 5' incision. The protein is UvrABC system protein C of Nitrosospira multiformis (strain ATCC 25196 / NCIMB 11849 / C 71).